The sequence spans 468 residues: Glutathione reductase (468 aa).

The FAD site is built by serine 17 and glycine 18. Serine 17 lines the glutathione pocket. Arginine 24 is a binding site for glutathione. 4 residues coordinate FAD: glutamate 38, threonine 45, cysteine 46, and lysine 54. Cysteine 46 and cysteine 51 are joined by a disulfide. Glutathione is bound at residue tyrosine 103. Residue alanine 119 participates in FAD binding. Positions 185, 188, 191, 208, 214, and 276 each coordinate NADP(+). Aspartate 317 provides a ligand contact to FAD. NADP(+) is bound at residue glutamate 323. Residue threonine 325 participates in FAD binding. Glutathione is bound at residue arginine 333. An NADP(+)-binding site is contributed by valine 358. Residue lysine 410 participates in glutathione binding. Position 457 (histidine 457) interacts with FAD. Histidine 457 (proton acceptor) is an active-site residue.

The protein belongs to the class-I pyridine nucleotide-disulfide oxidoreductase family. In terms of assembly, homodimer. FAD is required as a cofactor.

It localises to the cytoplasm. The protein resides in the mitochondrion. It catalyses the reaction 2 glutathione + NADP(+) = glutathione disulfide + NADPH + H(+). Its function is as follows. Catalyzes the reduction of glutathione disulfide (GSSG) to reduced glutathione (GSH). Constitutes the major mechanism to maintain a high GSH:GSSG ratio in the cytosol. The chain is Glutathione reductase (gtr-1) from Neurospora crassa (strain ATCC 24698 / 74-OR23-1A / CBS 708.71 / DSM 1257 / FGSC 987).